The following is a 207-amino-acid chain: Large ribosomal subunit protein uL3c (207 aa).

The tract at residues 128–148 (FTRGPMTHGSKNHRAPGSIGM) is disordered.

This sequence belongs to the universal ribosomal protein uL3 family. As to quaternary structure, part of the 50S ribosomal subunit.

The protein localises to the plastid. It is found in the chloroplast. Its function is as follows. One of the primary rRNA binding proteins, it binds directly near the 3'-end of the 23S rRNA, where it nucleates assembly of the 50S subunit. This Trieres chinensis (Marine centric diatom) protein is Large ribosomal subunit protein uL3c (rpl3).